A 338-amino-acid polypeptide reads, in one-letter code: Putative acyl-[acyl-carrier-protein] desaturase DesA1 (338 aa).

6 residues coordinate Fe cation: glutamate 76, glutamate 107, histidine 110, glutamate 167, glutamate 197, and histidine 200. A compositionally biased stretch (basic and acidic residues) spans 314–328 (EARTGKKVSAHELHK). Residues 314 to 338 (EARTGKKVSAHELHKTAGKLAMSRR) are disordered.

The protein belongs to the fatty acid desaturase type 2 family. In terms of assembly, homodimer. It depends on Fe(2+) as a cofactor.

The protein resides in the cell surface. It participates in lipid metabolism; fatty acid metabolism. Functionally, may be a desaturase involved in mycobacterial fatty acid biosynthesis. The polypeptide is Putative acyl-[acyl-carrier-protein] desaturase DesA1 (desA1) (Mycobacterium tuberculosis (strain CDC 1551 / Oshkosh)).